The primary structure comprises 782 residues: cGMP-specific 3',5'-cyclic phosphodiesterase gamma (782 aa).

The Cytoplasmic portion of the chain corresponds to 1–69 (MKHMFKNILF…LCDNMYSKKY (69 aa)). Residues 70 to 90 (VILVSHLISLLLMYSVCLIVG) traverse the membrane as a helical segment. The Extracellular segment spans residues 91 to 97 (NINDLFS). The chain crosses the membrane as a helical span at residues 98 to 118 (VLKLTYILLHTFTAINIILIL). Over 119–135 (TLHATHYVEMFKSIKGE) the chain is Cytoplasmic. Residues 136-156 (IFIFYIMMIFVIWCSWLFILF) form a helical membrane-spanning segment. At 157-181 (NNIKDLLPIVVNVNNFLYATYANNK) the chain is on the extracellular side. A helical transmembrane segment spans residues 182–202 (INIVLGFFAYLPIFYLITIIP). The Cytoplasmic portion of the chain corresponds to 203–208 (CRICYS). The chain crosses the membrane as a helical span at residues 209-229 (CAFDILFFIMKVAIFSVYYLI). Topologically, residues 230–239 (TMKSYILTDN) are extracellular. The chain crosses the membrane as a helical span at residues 240 to 260 (IFMIISALVGSLFIFVIRYII). Over 261 to 782 (EIQRRLSFHN…YAPNLNIYKL (522 aa)) the chain is Cytoplasmic. A disordered region spans residues 376-396 (GSKEEPEAESESECVDESKEG). The segment covering 381–390 (PEAESESECV) has biased composition (acidic residues). Residues 423–751 (YEEKENEILK…SKWTKIEKDE (329 aa)) form the PDEase domain. H504 serves as the catalytic Proton donor. 504–508 (HNSIH) contacts a nucleoside 3',5'-cyclic phosphate. A divalent metal cation is bound by residues H508, H544, D545, and D654. A nucleoside 3',5'-cyclic phosphate-binding residues include D545, D654, and Q706.

It belongs to the cyclic nucleotide phosphodiesterase family. Requires a divalent metal cation as cofactor.

The protein localises to the membrane. It is found in the endoplasmic reticulum membrane. It catalyses the reaction 3',5'-cyclic GMP + H2O = GMP + H(+). Its pathway is purine metabolism; 3',5'-cyclic GMP degradation; GMP from 3',5'-cyclic GMP: step 1/1. In terms of biological role, specifically hydrolyzes the second messenger cGMP, which is a key regulator of many important physiological processes. Probably by regulating cGMP levels, required for sporozoite motility and invasion of the mosquito salivary glands. In Plasmodium yoelii, this protein is cGMP-specific 3',5'-cyclic phosphodiesterase gamma.